A 146-amino-acid polypeptide reads, in one-letter code: Large ribosomal subunit protein uL15 (146 aa).

Residues 1-13 (MKLHELRPAEGSK) show a composition bias toward basic and acidic residues. The tract at residues 1 to 54 (MKLHELRPAEGSKKAPKRVGRGNGSGLGKTAGKGHKGQNARSGGGVRPGFEGGQ) is disordered. 2 stretches are compositionally biased toward gly residues: residues 21–31 (RGNGSGLGKTA) and 42–52 (SGGGVRPGFEG).

It belongs to the universal ribosomal protein uL15 family. Part of the 50S ribosomal subunit.

In terms of biological role, binds to the 23S rRNA. The sequence is that of Large ribosomal subunit protein uL15 from Clostridium novyi (strain NT).